The primary structure comprises 203 residues: Na(+)-translocating NADH-quinone reductase subunit E (203 aa).

6 helical membrane passes run 12-32 (AVFVENMALAFFLGMCTFLAL), 36-56 (MEAAIGLGIAVVVVLSVTVPV), 82-102 (FLGLLTYIGVIAAIVQILEMV), 115-135 (GVFLPLITVNCAIMGASLFMV), 145-165 (LVYGFGAGLGWALAIIALAGI), and 181-201 (LGITFITVGLMSLGFMSFSGI).

Belongs to the NqrDE/RnfAE family. As to quaternary structure, composed of six subunits; NqrA, NqrB, NqrC, NqrD, NqrE and NqrF.

It localises to the cell inner membrane. The enzyme catalyses a ubiquinone + n Na(+)(in) + NADH + H(+) = a ubiquinol + n Na(+)(out) + NAD(+). Its function is as follows. NQR complex catalyzes the reduction of ubiquinone-1 to ubiquinol by two successive reactions, coupled with the transport of Na(+) ions from the cytoplasm to the periplasm. NqrA to NqrE are probably involved in the second step, the conversion of ubisemiquinone to ubiquinol. In Hahella chejuensis (strain KCTC 2396), this protein is Na(+)-translocating NADH-quinone reductase subunit E.